Reading from the N-terminus, the 170-residue chain is 6,7-dimethyl-8-ribityllumazine synthase (170 aa).

5-amino-6-(D-ribitylamino)uracil is bound by residues tryptophan 25, 57–59 (AVE), and 79–81 (AVI). 84-85 (DT) serves as a coordination point for (2S)-2-hydroxy-3-oxobutyl phosphate. The active-site Proton donor is histidine 87. Residue asparagine 112 participates in 5-amino-6-(D-ribitylamino)uracil binding. Arginine 126 is a binding site for (2S)-2-hydroxy-3-oxobutyl phosphate.

Belongs to the DMRL synthase family.

It carries out the reaction (2S)-2-hydroxy-3-oxobutyl phosphate + 5-amino-6-(D-ribitylamino)uracil = 6,7-dimethyl-8-(1-D-ribityl)lumazine + phosphate + 2 H2O + H(+). The protein operates within cofactor biosynthesis; riboflavin biosynthesis; riboflavin from 2-hydroxy-3-oxobutyl phosphate and 5-amino-6-(D-ribitylamino)uracil: step 1/2. In terms of biological role, catalyzes the formation of 6,7-dimethyl-8-ribityllumazine by condensation of 5-amino-6-(D-ribitylamino)uracil with 3,4-dihydroxy-2-butanone 4-phosphate. This is the penultimate step in the biosynthesis of riboflavin. The polypeptide is 6,7-dimethyl-8-ribityllumazine synthase (Thermobifida fusca (strain YX)).